Reading from the N-terminus, the 114-residue chain is Tyrosine-protein phosphatase 11 (114 aa).

The 114-residue stretch at W1–V114 folds into the Tyrosine-protein phosphatase domain. D81 is a binding site for substrate.

It belongs to the protein-tyrosine phosphatase family.

The enzyme catalyses O-phospho-L-tyrosyl-[protein] + H2O = L-tyrosyl-[protein] + phosphate. This is Tyrosine-protein phosphatase 11 (STY-11) from Styela plicata (Wrinkled sea squirt).